The following is a 625-amino-acid chain: Alpha-protein kinase vwkA (625 aa).

The span at 1 to 15 (MESKYVLSTEKESKT) shows a compositional bias: basic and acidic residues. The tract at residues 1 to 64 (MESKYVLSTE…GLSSGGSKTH (64 aa)) is disordered. 2 stretches are compositionally biased toward polar residues: residues 25 to 39 (DMDS…TSLG) and 46 to 63 (SLKT…GSKT). Residues 87–114 (TKDSITLAKEKEKKIEKRNEEIKLTFKA) are a coiled coil. Positions 122-322 (DLLFIVDCTG…KMNERIFISI (201 aa)) constitute a VWFA domain. Positions 386 to 600 (TCLSSSYEMK…HCKKLGLTIP (215 aa)) constitute an Alpha-type protein kinase domain. 570-576 (GSCNLGK) contributes to the ATP binding site. The interval 602–625 (FTSSSSTSSSSRSTSSSSSISYSY) is disordered.

It belongs to the protein kinase superfamily. Alpha-type protein kinase family. ALPK subfamily. In terms of assembly, interacts with calmodulin; in the presence of calcium. Autophosphorylated, in vitro.

It is found in the cytoplasm. The protein resides in the cytosol. Its subcellular location is the perinuclear region. It localises to the contractile vacuole membrane. It catalyses the reaction L-seryl-[protein] + ATP = O-phospho-L-seryl-[protein] + ADP + H(+). It carries out the reaction L-threonyl-[protein] + ATP = O-phospho-L-threonyl-[protein] + ADP + H(+). With respect to regulation, autophosphorylation activity enhanced by calcium/calmodulin. In terms of biological role, displays a modest preference for threonine over serine residues. Does not phosphorylate myosin II, however can phosphorylate MBP, in vitro. May be involved in the regulation of myosin II function during cytokinesis. Overexpression leads to impaired cell proliferation in suspension culture and fails to develop beyond the mound stage. Both overexpression and absence of the gene can result in defects in cytokinesis and alterations in myosin II abundance and assembly. The chain is Alpha-protein kinase vwkA (vwkA) from Dictyostelium discoideum (Social amoeba).